We begin with the raw amino-acid sequence, 414 residues long: Myb1 protein (414 aa).

Myb-like domains lie at 242–266 (WNEV…LYYG), 268–320 (FEDD…IKIN), and 328–381 (KVKL…TNLN).

It is found in the nucleus. Transcriptional activator. Has a role in the parasite erythrocytic cycle where it directly regulates key genes involved in cell cycle regulation and progression. Binds directly to Myb regulatory elements. This chain is Myb1 protein, found in Plasmodium falciparum (isolate 3D7).